Consider the following 785-residue polypeptide: E3 UFM1-protein ligase 1 homolog (785 aa).

Positions 405–483 (ASFQDQDDDG…GGGGGNKKTV (79 aa)) are disordered.

Belongs to the UFL1 family.

In terms of biological role, E3 UFM1-protein ligase that mediates ufmylation of target proteins. The polypeptide is E3 UFM1-protein ligase 1 homolog (Drosophila pseudoobscura pseudoobscura (Fruit fly)).